The sequence spans 284 residues: Tropomyosin-1 (284 aa).

The stretch at 1 to 284 (MDAIKKKMLA…DSTFAELAGY (284 aa)) forms a coiled coil. The interval 103 to 131 (EERLQSATEKLEEASKAADESERGRKVLE) is disordered.

The protein belongs to the tropomyosin family. Homodimer.

Tropomyosin, in association with the troponin complex, plays a central role in the calcium dependent regulation of muscle contraction. The sequence is that of Tropomyosin-1 from Biomphalaria glabrata (Bloodfluke planorb).